We begin with the raw amino-acid sequence, 310 residues long: L-lactate dehydrogenase (310 aa).

Residues Val-11, Asp-32, Tyr-62, and 76–77 (GV) contribute to the NAD(+) site. Substrate-binding positions include Gln-79, Arg-85, and 117–120 (NPVD). Residues 115 to 117 (ATN) and Ser-140 contribute to the NAD(+) site. Substrate is bound at residue 145–148 (DTAR). Residues Arg-150 and His-165 each contribute to the beta-D-fructose 1,6-bisphosphate site. His-172 (proton acceptor) is an active-site residue. Tyr-218 is subject to Phosphotyrosine. Thr-227 is a binding site for substrate.

Belongs to the LDH/MDH superfamily. LDH family. Homotetramer.

Its subcellular location is the cytoplasm. The enzyme catalyses (S)-lactate + NAD(+) = pyruvate + NADH + H(+). The protein operates within fermentation; pyruvate fermentation to lactate; (S)-lactate from pyruvate: step 1/1. Activated by citrate at pH 5. Allosterically activated by fructose 1,6-bisphosphate (FBP) at pH from 5.8 to 7.2. Its function is as follows. Catalyzes the conversion of lactate to pyruvate. The protein is L-lactate dehydrogenase of Thermus aquaticus.